Consider the following 803-residue polypeptide: Volume-regulated anion channel subunit LRRC8C (803 aa).

At methionine 1–proline 22 the chain is on the cytoplasmic side. Residues tryptophan 23 to cysteine 43 traverse the membrane as a helical segment. The Extracellular segment spans residues threonine 44 to lysine 125. 2 disulfides stabilise this stretch: cysteine 54/cysteine 308 and cysteine 115/cysteine 293. Residues asparagine 64 and asparagine 70 are each glycosylated (N-linked (GlcNAc...) asparagine). A helical membrane pass occupies residues tyrosine 126–phenylalanine 146. The Cytoplasmic portion of the chain corresponds to lysine 147–threonine 266. The tract at residues glutamate 177 to glutamine 211 is disordered. A compositionally biased stretch (polar residues) spans asparagine 191–glutamine 211. Serine 212 and serine 215 each carry phosphoserine. A helical transmembrane segment spans residues valine 267–valine 287. At glutamine 288–serine 320 the chain is on the extracellular side. The helical transmembrane segment at phenylalanine 321–leucine 341 threads the bilayer. Residues phenylalanine 342–aspartate 803 lie on the Cytoplasmic side of the membrane. 17 LRR repeats span residues glutamate 397–threonine 420, asparagine 421–isoleucine 443, leucine 446–leucine 466, aspartate 467–phenylalanine 488, lysine 490–leucine 513, asparagine 515–serine 537, leucine 541–valine 563, serine 565–lysine 587, methionine 588–leucine 611, serine 613–histidine 635, arginine 637–leucine 659, threonine 660–cysteine 682, lysine 684–leucine 705, glutamine 706–cysteine 728, lysine 730–leucine 751, leucine 752–cysteine 774, and alanine 776–glutamine 799.

Belongs to the LRRC8 family. As to quaternary structure, heterohexamer; oligomerizes with other LRRC8 proteins (LRRC8A, LRRC8B, LRRC8D and/or LRRC8E) to form a heterohexamer. Homoheptamer; inactive, likely because it is not targeted to the plasma membrane in the absence of LRRC8A. In vivo, the subunit composition may depend primarily on expression levels, and heterooligomeric channels containing various proportions of the different LRRC8 proteins may coexist.

The protein resides in the cell membrane. It is found in the endoplasmic reticulum membrane. The enzyme catalyses chloride(in) = chloride(out). It carries out the reaction iodide(out) = iodide(in). It catalyses the reaction taurine(out) = taurine(in). The catalysed reaction is 2',3'-cGAMP(out) = 2',3'-cGAMP(in). Non-essential component of the volume-regulated anion channel (VRAC, also named VSOAC channel), an anion channel required to maintain a constant cell volume in response to extracellular or intracellular osmotic changes. The VRAC channel conducts iodide better than chloride and can also conduct organic osmolytes like taurine. Plays a redundant role in the efflux of amino acids, such as aspartate and glutamate, in response to osmotic stress. The VRAC channel also mediates transport of immunoreactive cyclic dinucleotide GMP-AMP (2'-3'-cGAMP), an immune messenger produced in response to DNA virus in the cytosol. Channel activity requires LRRC8A plus at least one other family member (LRRC8B, LRRC8C, LRRC8D or LRRC8E); channel characteristics depend on the precise subunit composition. The polypeptide is Volume-regulated anion channel subunit LRRC8C (Rattus norvegicus (Rat)).